Here is a 782-residue protein sequence, read N- to C-terminus: MDSIGINRAPLGSSSSAAAVTARRGIALRPARRSVASTNRVGVATIGFGDASGLRACSEKVRRFDSVRSTTARAQNGNAGRSMTEERGCTMSDTEMPFKYSSGKAFPLGVSQVEGGLNFALFSQHASSVILCLKLPGRGTEDEKGADVVEFVLDQQKNKTGDIWHVIVEGLPASGVLYGYRVGGPQGWDQGHRFDSSTVLLDPYAKLVSGRKYFGVAEEKSSQHFGTYDFDSSPFDWGDDYRLPNLPEADLVIYEMNVRAFTADESSGLDSTSRGSYLGLIDKIPHLLELGVNAVELLPVFEYDELEFKRYPNPRDHMVNTWGYSTINFFAPMSRYASAGGGPVAASKELKQMVKELHKAGIEVILDVVYNHTNEADDAHPYMTSFRGIDNKVYYMLDLNKNAELLNFSGCGNTLNCNHPVVKELILDSLRHWVEEYHIDGFRFDLASVLCRGPDGCPLDAPPLIKEIAKDAVLSRCKIIAEPWDCGGLYLVGRFPNWDRWAEWNGKYRDDLRRFIKGDPGMKGVFATRVSGSADLYQVNERKPYHGVNFVIAHDGFTLCDLVSYNLKHNDANGEGGCDGCNDNFSWNCGVEGETNDLNVLSLRSRQMKNFHVALMISQGTPMMLMGDEYGHTRYGNNNSYGHDTCINNFQWEQLEQRRDGHFRFFSEMIKFRHSNPILRRDRFLNKNDVTWHEDCWENQESKFLAFTVHDHNSGGDIYLAFNAHDYFVDAVIPPPPHHKCWNRVVDTNLESPNDIVPEGVPFTGPKYRIAPYSSILLKAKP.

The N-terminal 68 residues, 1 to 68 (MDSIGINRAP…EKVRRFDSVR (68 aa)), are a transit peptide targeting the chloroplast. A compositionally biased stretch (polar residues) spans 68–81 (RSTTARAQNGNAGR). Positions 68–88 (RSTTARAQNGNAGRSMTEERG) are disordered. Residue Asp-445 is the Nucleophile of the active site. Residue Glu-482 is the Proton donor of the active site.

The protein belongs to the glycosyl hydrolase 13 family. As to expression, expressed in leaves. Expressed at low levels in developing endosperm.

The protein resides in the plastid. It is found in the chloroplast. It localises to the amyloplast. It catalyses the reaction Hydrolysis of (1-&gt;6)-alpha-D-glucosidic branch linkages in glycogen, amylopectin and their beta-limit dextrins.. Starch-debranching enzyme that plays a role in the degradation of transitory starch during the night in leaf blades, facilitates the formation of spherical amyloplasts containing compound granules in the endosperm, and affects morphological characteristics of plastids. This Oryza sativa subsp. japonica (Rice) protein is Isoamylase 3, chloroplastic.